A 608-amino-acid chain; its full sequence is Glutamine--fructose-6-phosphate aminotransferase [isomerizing] (608 aa).

Catalysis depends on Cys2, which acts as the Nucleophile; for GATase activity. The Glutamine amidotransferase type-2 domain occupies 2 to 217 (CGIVGYIGKK…DNEFVLMTKD (216 aa)). 2 SIS domains span residues 284-424 (ISKE…EKGT) and 453-598 (IMKK…VDKP). The active-site For Fru-6P isomerization activity is the Lys603.

In terms of assembly, homodimer.

Its subcellular location is the cytoplasm. It carries out the reaction D-fructose 6-phosphate + L-glutamine = D-glucosamine 6-phosphate + L-glutamate. Catalyzes the first step in hexosamine metabolism, converting fructose-6P into glucosamine-6P using glutamine as a nitrogen source. In Clostridium tetani (strain Massachusetts / E88), this protein is Glutamine--fructose-6-phosphate aminotransferase [isomerizing].